Consider the following 882-residue polypeptide: Liprin-beta-2 (882 aa).

Residues 101 to 303 are a coiled coil; that stretch reads AASNETYQER…DKDRRIEELT (203 aa). Ser328, Ser362, and Ser386 each carry phosphoserine. The interval 339–554 is disordered; the sequence is RKWNTTNKSP…SRTRDTKGQK (216 aa). Over residues 388 to 399 the composition is skewed to basic and acidic residues; that stretch reads EDLRRESGDKCV. Composition is skewed to polar residues over residues 442–457 and 481–495; these read PTAS…SQPK and SSAS…QSPV. 2 positions are modified to phosphoserine: Ser502 and Ser518. Residues 502–515 show a composition bias toward basic residues; that stretch reads SPKGIKKFWGKIRR. SAM domains are found at residues 564–628, 636–699, and 724–789; these read WSTE…INAK, LDHI…LHVN, and WSNH…KFNA.

This sequence belongs to the liprin family. Liprin-beta subfamily. In terms of assembly, forms homodimers and heterodimers. As to expression, expressed widely. Strong expression in liver, kidney, intestine, heart, lung and testis. Low expression in brain and thymus.

Functionally, may regulate the disassembly of focal adhesions. Did not bind receptor-like tyrosine phosphatases type 2A. The sequence is that of Liprin-beta-2 (Ppfibp2) from Mus musculus (Mouse).